The sequence spans 322 residues: Undecaprenyl-phosphate 4-deoxy-4-formamido-L-arabinose transferase (322 aa).

Over 1 to 235 the chain is Cytoplasmic; sequence MFEIHPVKKV…TCLTTTPLRM (235 aa). Residues 236 to 256 form a helical membrane-spanning segment; sequence LSLLGSIIAIGGFSIAVLLVI. Residues 257–269 lie on the Periplasmic side of the membrane; the sequence is LRLTFGPQWAAEG. A helical membrane pass occupies residues 270 to 290; it reads VFMLFAVLFTFIGAQFIGMGL. The Cytoplasmic portion of the chain corresponds to 291 to 322; that stretch reads LGEYIGRIYTDVRARPRYFVQQVIRPSSKENE.

This sequence belongs to the glycosyltransferase 2 family.

Its subcellular location is the cell inner membrane. It catalyses the reaction UDP-4-deoxy-4-formamido-beta-L-arabinose + di-trans,octa-cis-undecaprenyl phosphate = 4-deoxy-4-formamido-alpha-L-arabinopyranosyl di-trans,octa-cis-undecaprenyl phosphate + UDP. Its pathway is glycolipid biosynthesis; 4-amino-4-deoxy-alpha-L-arabinose undecaprenyl phosphate biosynthesis; 4-amino-4-deoxy-alpha-L-arabinose undecaprenyl phosphate from UDP-4-deoxy-4-formamido-beta-L-arabinose and undecaprenyl phosphate: step 1/2. It participates in bacterial outer membrane biogenesis; lipopolysaccharide biosynthesis. In terms of biological role, catalyzes the transfer of 4-deoxy-4-formamido-L-arabinose from UDP to undecaprenyl phosphate. The modified arabinose is attached to lipid A and is required for resistance to polymyxin and cationic antimicrobial peptides. This chain is Undecaprenyl-phosphate 4-deoxy-4-formamido-L-arabinose transferase, found in Escherichia coli O139:H28 (strain E24377A / ETEC).